A 284-amino-acid polypeptide reads, in one-letter code: Nucleoid occlusion protein (284 aa).

A DNA-binding region (H-T-H motif) is located at residues 143–162 (EALAQRVGKSQSAIANKMRL).

Belongs to the ParB family.

The protein resides in the cytoplasm. Its subcellular location is the nucleoid. In terms of biological role, effects nucleoid occlusion by binding relatively nonspecifically to DNA and preventing the assembly of the division machinery in the vicinity of the nucleoid, especially under conditions that disturb the cell cycle. It helps to coordinate cell division and chromosome segregation by preventing the formation of the Z ring through the nucleoid, which would cause chromosome breakage. The protein is Nucleoid occlusion protein of Listeria monocytogenes serovar 1/2a (strain ATCC BAA-679 / EGD-e).